Consider the following 638-residue polypeptide: Exotoxin A (638 aa).

The signal sequence occupies residues 1–25; that stretch reads MHLTPHWIPLVASLGLLAGGSFASA. A domain Ia (required for target cell recognition) region spans residues 26-277; sequence AEEAFDLWNE…VISHRLHFPE (252 aa). The tract at residues 278–389 is II (required for translocation in target cell cytoplasm); the sequence is GGSLAALTAH…TGNDEAGAAS (112 aa). Cys290 and Cys312 form a disulfide bridge. The domain Ib stretch occupies residues 390 to 429; that stretch reads ADVVSLTCPVAAGECAGPADSGDALLERNYPTGAEFLGDG. Residues 430 to 638 are III (required for ADP-ribosyl activity); it reads GDISFSTRGT…PGKPPREDLK (209 aa). NAD(+)-binding positions include 465-467, Ser474, 479-485, and Glu578; these read HGT and GVRARSQ. Glu578 is a catalytic residue. The interval 596 to 638 is disordered; sequence IPTDPRNVGGDLDPSSIPDKEQAISALPDYASQPGKPPREDLK.

Post-translationally, the 8 cysteines participate in intrachain disulfide bonds.

It catalyses the reaction diphthamide-[translation elongation factor 2] + NAD(+) = N-(ADP-D-ribosyl)diphthamide-[translation elongation factor 2] + nicotinamide + H(+). Its activity is regulated as follows. Inhibited by 1,8-naphthalimide (NAP) as well as a number of poly(ADP-ribose) polymerase inhibitors and other compounds. Its function is as follows. An NAD-dependent ADP-ribosyltransferase (ADPRT). Catalyzes the transfer of the ADP ribosyl moiety of oxidized NAD (NAD(+)) onto eukaryotic elongation factor 2 (eEF-2) thus arresting protein synthesis. Has an LD(50) of 65 ng/ml against the human lung epithelial cell line C38. The protein is Exotoxin A of Pseudomonas aeruginosa (strain ATCC 15692 / DSM 22644 / CIP 104116 / JCM 14847 / LMG 12228 / 1C / PRS 101 / PAO1).